Reading from the N-terminus, the 92-residue chain is Endoribonuclease VapD homolog (92 aa).

Belongs to the VapD ribonuclease family. Homodimer.

Its function is as follows. Cleaves ssRNA, mostly between U:A. The chain is Endoribonuclease VapD homolog from Neisseria gonorrhoeae.